The primary structure comprises 176 residues: Calcium and integrin-binding family member 2 (176 aa).

EF-hand domains are found at residues 55-90 (RENP…LCES), 92-127 (PRDL…LTKS), and 133-168 (EVVL…APDF). Ca(2+) contacts are provided by Asp-105, Asn-107, Asp-109, Asp-116, Asp-146, Asp-148, Asp-150, Lys-152, and Asp-157.

Monomer. Homodimer. Interacts with WHRN and MYO7A. Interacts with ITGA2B (via C-terminus cytoplasmic tail region); the interactions are stabilized/increased in a calcium and magnesium-dependent manner. Interacts with ITGA7 (via C-terminus cytoplasmic tail region); the interactions are stabilized/increased in a calcium and magnesium-dependent manner. Interacts with TMC1. Interacts with TMC2. As to expression, expressed in liver, heart, kidney, brain, spleen, stomach, ovary, testis and muscle.

It localises to the cytoplasm. It is found in the cell projection. Its subcellular location is the stereocilium. The protein localises to the photoreceptor inner segment. The protein resides in the cilium. It localises to the photoreceptor outer segment. It is found in the cell membrane. Its subcellular location is the sarcolemma. Its function is as follows. Calcium- and integrin-binding protein that plays a role in intracellular calcium homeostasis. Acts as an auxiliary subunit of the sensory mechanoelectrical transduction (MET) channel in hair cells. Essential for mechanoelectrical transduction (MET) currents in auditory hair cells and thereby required for hearing. Regulates the function of hair cell mechanotransduction by controlling the distribution of transmembrane channel-like proteins TMC1 and TMC2, and by regulating the function of the MET channels in hair cells. Required for the maintenance of auditory hair cell stereocilia bundle morphology and function and for hair-cell survival in the cochlea. Critical for proper photoreceptor cell maintenance and function. Plays a role in intracellular calcium homeostasis by decreasing ATP-induced calcium release. This chain is Calcium and integrin-binding family member 2 (CIB2), found in Ovis aries (Sheep).